A 244-amino-acid polypeptide reads, in one-letter code: Thaumatin-like protein 1 (244 aa).

The first 22 residues, 1-22, serve as a signal peptide directing secretion; sequence MKFEALIGLVLVFLSEHAGVYS. Intrachain disulfides connect Cys-31–Cys-243, Cys-79–Cys-89, Cys-94–Cys-101, Cys-149–Cys-232, Cys-154–Cys-215, Cys-162–Cys-178, Cys-182–Cys-191, and Cys-192–Cys-202. N-linked (GlcNAc...) asparagine glycosylation is present at Asn-150.

The protein belongs to the thaumatin family. In terms of processing, N-glycosylated. As to expression, style.

Its subcellular location is the secreted. The protein is Thaumatin-like protein 1 (TL1) of Pyrus pyrifolia (Chinese pear).